The following is a 159-amino-acid chain: Endoribonuclease YbeY (159 aa).

The Zn(2+) site is built by histidine 125, histidine 129, and histidine 135.

Belongs to the endoribonuclease YbeY family. Zn(2+) is required as a cofactor.

It localises to the cytoplasm. Functionally, single strand-specific metallo-endoribonuclease involved in late-stage 70S ribosome quality control and in maturation of the 3' terminus of the 16S rRNA. This chain is Endoribonuclease YbeY, found in Lactiplantibacillus plantarum (strain ATCC BAA-793 / NCIMB 8826 / WCFS1) (Lactobacillus plantarum).